Consider the following 176-residue polypeptide: MPLRPGRCYRKFSGPAYTRREYIPGIPMPKITKFVMGNVNGDYDYELRLITTEKGQIRHNALEAARVIALKYLSKKLASEQNFALVVTKYPHHVIRENKMMAFAGADRLQDGMRLSFGKPIGTAARLEKLGELVMYVRVKKEHLEAAKEALKIASSKLPIRTKIEISALNKEAAAQ.

Belongs to the universal ribosomal protein uL16 family.

The sequence is that of Large ribosomal subunit protein uL16 from Sulfolobus acidocaldarius (strain ATCC 33909 / DSM 639 / JCM 8929 / NBRC 15157 / NCIMB 11770).